We begin with the raw amino-acid sequence, 386 residues long: Short-chain dehydrogenase/reductase family 42E member 1 (386 aa).

The Proton acceptor role is filled by Tyr150. Lys154 is a binding site for NAD(+). The next 2 membrane-spanning stretches (helical) occupy residues 279–299 (FPLS…FFIS) and 363–383 (YLIW…SWLP).

Belongs to the 3-beta-HSD family.

The protein resides in the membrane. This chain is Short-chain dehydrogenase/reductase family 42E member 1 (sdr42e1), found in Xenopus laevis (African clawed frog).